Consider the following 276-residue polypeptide: Dermonecrotic toxin LlSicTox-alphaIV3 (276 aa).

His-5 is a catalytic residue. Glu-25 and Asp-27 together coordinate Mg(2+). Catalysis depends on His-41, which acts as the Nucleophile. 2 disulfide bridges follow: Cys-45–Cys-51 and Cys-47–Cys-192. Position 85 (Asp-85) interacts with Mg(2+).

Belongs to the arthropod phospholipase D family. Class II subfamily. Mg(2+) is required as a cofactor. In terms of tissue distribution, expressed by the venom gland.

The protein localises to the secreted. It carries out the reaction an N-(acyl)-sphingosylphosphocholine = an N-(acyl)-sphingosyl-1,3-cyclic phosphate + choline. The enzyme catalyses an N-(acyl)-sphingosylphosphoethanolamine = an N-(acyl)-sphingosyl-1,3-cyclic phosphate + ethanolamine. The catalysed reaction is a 1-acyl-sn-glycero-3-phosphocholine = a 1-acyl-sn-glycero-2,3-cyclic phosphate + choline. It catalyses the reaction a 1-acyl-sn-glycero-3-phosphoethanolamine = a 1-acyl-sn-glycero-2,3-cyclic phosphate + ethanolamine. In terms of biological role, dermonecrotic toxins cleave the phosphodiester linkage between the phosphate and headgroup of certain phospholipids (sphingolipid and lysolipid substrates), forming an alcohol (often choline) and a cyclic phosphate. This toxin acts on sphingomyelin (SM). It may also act on ceramide phosphoethanolamine (CPE), lysophosphatidylcholine (LPC) and lysophosphatidylethanolamine (LPE), but not on lysophosphatidylserine (LPS), and lysophosphatidylglycerol (LPG). It acts by transphosphatidylation, releasing exclusively cyclic phosphate products as second products. Induces dermonecrosis, hemolysis, increased vascular permeability, edema, inflammatory response, and platelet aggregation. This is Dermonecrotic toxin LlSicTox-alphaIV3 from Loxosceles laeta (South American recluse spider).